The sequence spans 554 residues: Glucose-6-phosphate isomerase (554 aa).

The active-site Proton donor is the Glu359. Catalysis depends on residues His390 and Lys518.

The protein belongs to the GPI family.

The protein localises to the cytoplasm. It carries out the reaction alpha-D-glucose 6-phosphate = beta-D-fructose 6-phosphate. Its pathway is carbohydrate biosynthesis; gluconeogenesis. It functions in the pathway carbohydrate degradation; glycolysis; D-glyceraldehyde 3-phosphate and glycerone phosphate from D-glucose: step 2/4. Catalyzes the reversible isomerization of glucose-6-phosphate to fructose-6-phosphate. This Pseudomonas fluorescens (strain Pf0-1) protein is Glucose-6-phosphate isomerase.